Consider the following 429-residue polypeptide: Forkhead box protein A1-A (429 aa).

A DNA-binding region (fork-head) is located at residues 159–253 (KPPYSYISLI…ENGCYLRRQK (95 aa)). Basic and acidic residues predominate over residues 258 to 274 (EKTQGGKGNQDGRKDHS). A disordered region spans residues 258–341 (EKTQGGKGNQ…HSTHSLAHES (84 aa)). Residues 287–304 (SSQMDSSSSMSNPSSSPQ) show a composition bias toward low complexity. Residues 325–336 (PLSSHQNHSTHS) show a composition bias toward polar residues.

At neurula stage, expressed in the notochord but not in the neural floor plate. During tailbud stages, expressed in the neural floor plate. At stage 35, expressed in the rhombencephalon, mesencephalon, pharyngeal pouches, foregut and pronephros. At stage 44, expressed in a region of the gut on the right hand side of the embryo. Expressed in the adult lung and liver.

The protein localises to the nucleus. Functionally, probable transcription factor. This Xenopus laevis (African clawed frog) protein is Forkhead box protein A1-A (foxa1-a).